Consider the following 206-residue polypeptide: Thymidylate kinase (206 aa).

Residue 11–18 participates in ATP binding; that stretch reads GIDGAGKT.

Belongs to the thymidylate kinase family.

The enzyme catalyses dTMP + ATP = dTDP + ADP. In terms of biological role, phosphorylation of dTMP to form dTDP in both de novo and salvage pathways of dTTP synthesis. In Burkholderia cenocepacia (strain HI2424), this protein is Thymidylate kinase.